Here is a 600-residue protein sequence, read N- to C-terminus: Pyranose dehydrogenase 3 (600 aa).

An N-terminal signal peptide occupies residues 1–25 (MLPRVARLNTHLVSLALLGFQITYG). N-linked (GlcNAc...) asparagine glycosylation is found at asparagine 99 and asparagine 114. Histidine 127 carries the tele-8alpha-FAD histidine modification. N-linked (GlcNAc...) asparagine glycans are attached at residues asparagine 173, asparagine 199, asparagine 275, asparagine 342, asparagine 399, and asparagine 507. Residue histidine 535 is the Proton acceptor of the active site. Asparagine 546 carries N-linked (GlcNAc...) asparagine glycosylation. Residue histidine 579 is part of the active site.

It belongs to the GMC oxidoreductase family. In terms of assembly, monomer. The cofactor is FAD. N-glycosylated.

It localises to the secreted. The enzyme catalyses pyranose + acceptor = pyranos-2-ulose + reduced acceptor.. The catalysed reaction is pyranose + acceptor = pyranos-3-ulose + reduced acceptor.. It catalyses the reaction pyranose + acceptor = pyranos-2,3-diulose + reduced acceptor.. It carries out the reaction a pyranoside + acceptor = a pyranosid-3-ulose + reduced acceptor.. The enzyme catalyses a pyranoside + acceptor = a pyranosid-3,4-diulose + reduced acceptor.. Functionally, catalyzes the single-oxidation or sequential double oxidation reaction of carbohydrates primarily at carbon-2 and/or carbon-3 with the concomitant reduction of the flavin. The enzyme exhibits a broad sugar substrate specificity, oxidizing different aldopyranoses to the corresponding C-1, C-2, C-3 or C-1,2, C-2,3 and C-3,4 (di)dehydro sugars with substrate-specific regioselectivity. Accepts only a narrow range of electron acceptors such as substituted benzoquinones and complexed metal ions and reacts extremely slowly with O(2) as acceptor. May play a role in the natural recycling of plant matter by oxidizing all major monosaccharides in lignocellulose and by reducing quinone compounds or reactive radical species generated during lignin depolymerization. The polypeptide is Pyranose dehydrogenase 3 (Leucoagaricus meleagris (Western flat-topped agaric)).